Here is a 183-residue protein sequence, read N- to C-terminus: Transposon gamma-delta resolvase (183 aa).

The Resolvase/invertase-type recombinase catalytic domain maps to 2–137; the sequence is RLFGYARVST…EGRQEAMAKG (136 aa). Residue Ser10 is the O-(5'-phospho-DNA)-serine intermediate of the active site. The segment at residues 161-180 is a DNA-binding region (H-T-H motif); it reads ASHISKTMNIARSTVYKVIN.

Belongs to the site-specific recombinase resolvase family.

Functionally, this protein catalyzes the site-specific recombination of the transposon and also regulates its frequency of transposition. The sequence is that of Transposon gamma-delta resolvase (tnpR) from Escherichia coli (strain K12).